A 161-amino-acid polypeptide reads, in one-letter code: Nucleotide-binding protein Bcep1808_2648 (161 aa).

The protein belongs to the YajQ family.

In terms of biological role, nucleotide-binding protein. The protein is Nucleotide-binding protein Bcep1808_2648 of Burkholderia vietnamiensis (strain G4 / LMG 22486) (Burkholderia cepacia (strain R1808)).